The chain runs to 258 residues: Tryptophan synthase alpha chain (258 aa).

Residues Glu47 and Asp58 each act as proton acceptor in the active site.

This sequence belongs to the TrpA family. Tetramer of two alpha and two beta chains.

The catalysed reaction is (1S,2R)-1-C-(indol-3-yl)glycerol 3-phosphate + L-serine = D-glyceraldehyde 3-phosphate + L-tryptophan + H2O. It participates in amino-acid biosynthesis; L-tryptophan biosynthesis; L-tryptophan from chorismate: step 5/5. In terms of biological role, the alpha subunit is responsible for the aldol cleavage of indoleglycerol phosphate to indole and glyceraldehyde 3-phosphate. The chain is Tryptophan synthase alpha chain from Bacillus cereus (strain AH820).